The chain runs to 382 residues: POU domain, class 3, transcription factor 2-A (382 aa).

Disordered stretches follow at residues 69-136, 150-206, and 348-382; these read PWAT…SSNG, GMIN…TPTS, and EKRM…TSVQ. Residues 122–136 are compositionally biased toward polar residues; the sequence is STGSTHLSSMASSNG. Positions 165 to 178 are enriched in basic and acidic residues; the sequence is LRDSHDDHHGDHGH. The span at 179-194 shows a compositional bias: low complexity; the sequence is QQVSQAQQQHSQLQGG. In terms of domain architecture, POU-specific spans 201 to 275; that stretch reads EDTPTSDDLE…LLNKWLEEAD (75 aa). The segment at residues 293–352 is a DNA-binding region (homeobox); it reads KRKKRTSIEVSVKGALESHFLKCPKPSAPEITSLADSLQLEKEVVRVWFCNRRQKEKRMT.

Belongs to the POU transcription factor family. Class-3 subfamily. In terms of tissue distribution, expressed in the developing brain and spinal cord. Also found in a restricted region of the auditory vesicle during development. In the adult, expression is restricted to the brain.

The protein resides in the nucleus. Functionally, transcription factor that may be implicated in patterning of the central nervous system during early development. The chain is POU domain, class 3, transcription factor 2-A (pou3f2-a) from Xenopus laevis (African clawed frog).